Reading from the N-terminus, the 416-residue chain is S-adenosylmethionine synthase (416 aa).

H16 provides a ligand contact to ATP. A Mg(2+)-binding site is contributed by D18. Residue E44 participates in K(+) binding. Positions 57 and 100 each coordinate L-methionine. The tract at residues Q100–Q110 is flexible loop. ATP contacts are provided by residues D175–K177, K251–F252, D260, R266–K267, A283, and K287. D260 provides a ligand contact to L-methionine. L-methionine is bound at residue K291.

It belongs to the AdoMet synthase family. In terms of assembly, homotetramer; dimer of dimers. Mg(2+) is required as a cofactor. It depends on K(+) as a cofactor.

The protein localises to the cytoplasm. It catalyses the reaction L-methionine + ATP + H2O = S-adenosyl-L-methionine + phosphate + diphosphate. It functions in the pathway amino-acid biosynthesis; S-adenosyl-L-methionine biosynthesis; S-adenosyl-L-methionine from L-methionine: step 1/1. In terms of biological role, catalyzes the formation of S-adenosylmethionine (AdoMet) from methionine and ATP. The overall synthetic reaction is composed of two sequential steps, AdoMet formation and the subsequent tripolyphosphate hydrolysis which occurs prior to release of AdoMet from the enzyme. This Crocosphaera subtropica (strain ATCC 51142 / BH68) (Cyanothece sp. (strain ATCC 51142)) protein is S-adenosylmethionine synthase.